The primary structure comprises 454 residues: Septin-10 (454 aa).

One can recognise a Septin-type G domain in the interval 63–329 (QGFCFNILCV…ELYRRCKLEE (267 aa)). The interval 73 to 80 (GETGIGKS) is G1 motif. GTP-binding positions include 73-80 (GETGIGKS), Gly-128, 209-217 (KADTVSKTE), Gly-263, and Arg-278. The interval 125-128 (NTVG) is G3 motif. The interval 208 to 211 (AKAD) is G4 motif.

Belongs to the TRAFAC class TrmE-Era-EngA-EngB-Septin-like GTPase superfamily. Septin GTPase family. In terms of assembly, septins polymerize into heterooligomeric protein complexes that form filaments, and can associate with cellular membranes, actin filaments and microtubules. GTPase activity is required for filament formation. Interacts with ADGB. Proteolytically cleaved in vitro in a calmodulin-dependent manner. In terms of tissue distribution, widely expressed. Abundantly expressed in heart and kidney, placenta, skeletal muscles, liver and lung, as well as various tumor cell lines.

It is found in the cytoplasm. Its subcellular location is the cytoskeleton. The protein localises to the cell projection. The protein resides in the cilium. It localises to the flagellum. In terms of biological role, filament-forming cytoskeletal GTPase. May play a role in cytokinesis (Potential). The polypeptide is Septin-10 (Homo sapiens (Human)).